Consider the following 164-residue polypeptide: Lipoprotein signal peptidase (164 aa).

3 consecutive transmembrane segments (helical) span residues 12–32, 70–90, and 102–122; these read WLWL…LILQ, WFFA…MYRS, and ALII…GFVV. Catalysis depends on residues aspartate 123 and aspartate 141. The helical transmembrane segment at 137–157 threads the bilayer; that stretch reads FNLADTAICVGAALIVLEGFL.

The protein belongs to the peptidase A8 family.

The protein resides in the cell inner membrane. The catalysed reaction is Release of signal peptides from bacterial membrane prolipoproteins. Hydrolyzes -Xaa-Yaa-Zaa-|-(S,diacylglyceryl)Cys-, in which Xaa is hydrophobic (preferably Leu), and Yaa (Ala or Ser) and Zaa (Gly or Ala) have small, neutral side chains.. The protein operates within protein modification; lipoprotein biosynthesis (signal peptide cleavage). In terms of biological role, this protein specifically catalyzes the removal of signal peptides from prolipoproteins. This is Lipoprotein signal peptidase from Escherichia coli O157:H7.